The sequence spans 113 residues: Sperm-associated antigen 11B (113 aa).

A signal peptide spans 1-26 (MIPRLLPFFASLLFAALLFPGLSNAS). 3 disulfides stabilise this stretch: Cys-80/Cys-108, Cys-87/Cys-101, and Cys-91/Cys-109.

The protein belongs to the beta-defensin family.

The protein resides in the secreted. Has antimicrobial activity against E.coli. Plays a role in the defense response in the male reproductive tract, contributing to sperm maturation, storage and protection. The chain is Sperm-associated antigen 11B from Mus musculus (Mouse).